The chain runs to 717 residues: Acetone carboxylase beta subunit (717 aa).

As to quaternary structure, heterohexamer of two alpha, two beta and two gamma subunits. Fe cation serves as cofactor. The cofactor is Mg(2+). Requires Zn(2+) as cofactor. In terms of processing, the N-terminus is blocked.

The catalysed reaction is acetone + hydrogencarbonate + 2 ATP + 3 H2O = acetoacetate + 2 AMP + 4 phosphate + 4 H(+). In terms of biological role, catalyzes the carboxylation of acetone to form acetoacetate. Has a reduced activity on butanone, and no activity on 2-pentatone, 3-pentatone, 2-hexanone, chloroacetone, pyruvate, phosphoenolpyruvate, acetaldehyde, propionaldehyde and propylene oxide. This chain is Acetone carboxylase beta subunit, found in Xanthobacter autotrophicus (strain ATCC BAA-1158 / Py2).